A 102-amino-acid chain; its full sequence is Exocrine gland-secreted peptide 1 (102 aa).

A signal peptide spans 1–22; the sequence is MTSLPVLLFLIILLLPSMITEG. Cys-63 and Cys-95 are joined by a disulfide.

It belongs to the exocrine gland-secreted peptide family. In terms of assembly, monomer. Expressed in the extraorbital lacrimal gland from where it is secreted into tears.

It localises to the secreted. In terms of biological role, male-specific phermone which is recognized by the Vmn2r116/V2rp5 receptor in the vomeronasal organ (VNO) and enhances female sexual receptive behavior (lordosis) upon male mounting, resulting in successful copulation. In Mus musculus (Mouse), this protein is Exocrine gland-secreted peptide 1.